Here is a 122-residue protein sequence, read N- to C-terminus: Large ribosomal subunit protein uL14 (122 aa).

This sequence belongs to the universal ribosomal protein uL14 family. Part of the 50S ribosomal subunit. Forms a cluster with proteins L3 and L19. In the 70S ribosome, L14 and L19 interact and together make contacts with the 16S rRNA in bridges B5 and B8.

Its function is as follows. Binds to 23S rRNA. Forms part of two intersubunit bridges in the 70S ribosome. The protein is Large ribosomal subunit protein uL14 of Nitrobacter winogradskyi (strain ATCC 25391 / DSM 10237 / CIP 104748 / NCIMB 11846 / Nb-255).